Reading from the N-terminus, the 230-residue chain is Sugar fermentation stimulation protein homolog (230 aa).

This sequence belongs to the SfsA family.

The sequence is that of Sugar fermentation stimulation protein homolog from Clostridium botulinum (strain Okra / Type B1).